A 496-amino-acid chain; its full sequence is Lysine--tRNA ligase (496 aa).

Mg(2+)-binding residues include glutamate 409 and glutamate 416.

Belongs to the class-II aminoacyl-tRNA synthetase family. In terms of assembly, homodimer. Mg(2+) serves as cofactor.

The protein resides in the cytoplasm. It catalyses the reaction tRNA(Lys) + L-lysine + ATP = L-lysyl-tRNA(Lys) + AMP + diphosphate. The sequence is that of Lysine--tRNA ligase from Streptococcus pneumoniae (strain CGSP14).